The primary structure comprises 136 residues: Histone H3.2 (136 aa).

Residues 1–20 (MARTKQTARKSTGGKAPRKQ) are disordered. K5 carries the N6-methylated lysine modification. At K10 the chain carries N6-acetyllysine; alternate. At K10 the chain carries N6-methylated lysine; alternate. Phosphoserine is present on S11. T12 carries the phosphothreonine modification. An N6-acetyllysine modification is found at K15. Residues K19 and K24 each carry the N6-acetyllysine; alternate modification. K19 and K24 each carry N6-methylated lysine; alternate. N6-methylated lysine is present on K37.

Belongs to the histone H3 family. In terms of assembly, the nucleosome is a histone octamer containing two molecules each of H2A, H2B, H3 and H4 assembled in one H3-H4 heterotetramer and two H2A-H2B heterodimers. The octamer wraps approximately 147 bp of DNA. In terms of processing, acetylation is generally linked to gene activation. Can be acetylated to form H3K9ac, H3K14ac, H3K18ac and H3K23ac. H3K9ac could compete with H3K9me and prevent gene silencing. H3K9ac is restricted to euchromatin. Methylated to form mainly H3K4me, H3K9me, H3K18me, H3K23me and H3K36me. H3K4me1/2/3, H3K9me3 and H3K36me1/2/3 are typical marks for euchromatin, whereas heterochromatic chromocenters are enriched in H3K9me1/2. H2BK143ub1 is probably prerequisite for H3K4me. Post-translationally, can be phosphorylated to form H3S10ph and H3T11ph.

It is found in the nucleus. The protein localises to the chromosome. Its function is as follows. Core component of nucleosome. Nucleosomes wrap and compact DNA into chromatin, limiting DNA accessibility to the cellular machineries which require DNA as a template. Histones thereby play a central role in transcription regulation, DNA repair, DNA replication and chromosomal stability. DNA accessibility is regulated via a complex set of post-translational modifications of histones, also called histone code, and nucleosome remodeling. The sequence is that of Histone H3.2 from Cichorium intybus (Chicory).